Reading from the N-terminus, the 127-residue chain is DNA-directed RNA polymerase subunit omega (127 aa).

This sequence belongs to the RNA polymerase subunit omega family. In terms of assembly, the RNAP catalytic core consists of 2 alpha, 1 beta, 1 beta' and 1 omega subunit. When a sigma factor is associated with the core the holoenzyme is formed, which can initiate transcription.

It carries out the reaction RNA(n) + a ribonucleoside 5'-triphosphate = RNA(n+1) + diphosphate. Promotes RNA polymerase assembly. Latches the N- and C-terminal regions of the beta' subunit thereby facilitating its interaction with the beta and alpha subunits. The sequence is that of DNA-directed RNA polymerase subunit omega from Rickettsia typhi (strain ATCC VR-144 / Wilmington).